The chain runs to 381 residues: (S)-scoulerine 9-O-methyltransferase (381 aa).

S-adenosyl-L-methionine-binding residues include G223, E246, D266, M267, and K280. H284 serves as the catalytic Proton acceptor.

This sequence belongs to the class I-like SAM-binding methyltransferase superfamily. Cation-independent O-methyltransferase family. COMT subfamily.

The catalysed reaction is (S)-scoulerine + S-adenosyl-L-methionine = (S)-tetrahydrocolumbamine + S-adenosyl-L-homocysteine + H(+). Functionally, produces a precursor of protoberberine alkaloids. The protein is (S)-scoulerine 9-O-methyltransferase (SMT) of Coptis japonica (Japanese goldthread).